Consider the following 304-residue polypeptide: HPr kinase/phosphorylase (304 aa).

Catalysis depends on residues H136 and K157. 151-158 is a binding site for ATP; sequence GESGIGKS. S158 is a Mg(2+) binding site. The active-site Proton acceptor; for phosphorylation activity. Proton donor; for dephosphorylation activity is the D175. The interval 198–207 is important for the catalytic mechanism of both phosphorylation and dephosphorylation; it reads LEVRGIGIID. E199 is a binding site for Mg(2+). The active site involves R240. The tract at residues 261–266 is important for the catalytic mechanism of dephosphorylation; the sequence is PVRPGR.

It belongs to the HPrK/P family. As to quaternary structure, homohexamer. Mg(2+) serves as cofactor.

The enzyme catalyses [HPr protein]-L-serine + ATP = [HPr protein]-O-phospho-L-serine + ADP + H(+). It carries out the reaction [HPr protein]-O-phospho-L-serine + phosphate + H(+) = [HPr protein]-L-serine + diphosphate. Functionally, catalyzes the ATP- as well as the pyrophosphate-dependent phosphorylation of a specific serine residue in HPr, a phosphocarrier protein of the phosphoenolpyruvate-dependent sugar phosphotransferase system (PTS). HprK/P also catalyzes the pyrophosphate-producing, inorganic phosphate-dependent dephosphorylation (phosphorolysis) of seryl-phosphorylated HPr (P-Ser-HPr). The two antagonistic activities of HprK/P are regulated by several intracellular metabolites, which change their concentration in response to the absence or presence of rapidly metabolisable carbon sources (glucose, fructose, etc.) in the growth medium. Therefore, by controlling the phosphorylation state of HPr, HPrK/P is a sensor enzyme that plays a major role in the regulation of carbon metabolism and sugar transport: it mediates carbon catabolite repression (CCR), and regulates PTS-catalyzed carbohydrate uptake and inducer exclusion. The chain is HPr kinase/phosphorylase from Clostridium botulinum (strain Eklund 17B / Type B).